A 133-amino-acid chain; its full sequence is Maturin (133 aa).

It belongs to the MTURN family.

The protein localises to the cytoplasm. Functionally, may be involved in early neuronal development. May play a role in promoting megakaryocyte differentiation. In Danio rerio (Zebrafish), this protein is Maturin (mturn).